Consider the following 297-residue polypeptide: Bifunctional protein FolD 2 (297 aa).

Residues 172–174 (GRG), Thr-199, and Val-240 each bind NADP(+).

It belongs to the tetrahydrofolate dehydrogenase/cyclohydrolase family. In terms of assembly, homodimer.

The catalysed reaction is (6R)-5,10-methylene-5,6,7,8-tetrahydrofolate + NADP(+) = (6R)-5,10-methenyltetrahydrofolate + NADPH. The enzyme catalyses (6R)-5,10-methenyltetrahydrofolate + H2O = (6R)-10-formyltetrahydrofolate + H(+). Its pathway is one-carbon metabolism; tetrahydrofolate interconversion. Its function is as follows. Catalyzes the oxidation of 5,10-methylenetetrahydrofolate to 5,10-methenyltetrahydrofolate and then the hydrolysis of 5,10-methenyltetrahydrofolate to 10-formyltetrahydrofolate. The sequence is that of Bifunctional protein FolD 2 from Paenarthrobacter aurescens (strain TC1).